Reading from the N-terminus, the 84-residue chain is Small ribosomal subunit protein bS20 (84 aa).

It belongs to the bacterial ribosomal protein bS20 family.

Functionally, binds directly to 16S ribosomal RNA. The chain is Small ribosomal subunit protein bS20 from Bacteroides fragilis (strain ATCC 25285 / DSM 2151 / CCUG 4856 / JCM 11019 / LMG 10263 / NCTC 9343 / Onslow / VPI 2553 / EN-2).